Here is a 653-residue protein sequence, read N- to C-terminus: Chaperone protein HtpG (653 aa).

Residues 1–361 are a; substrate-binding; it reads MSETNQVQNH…SNDLPLNVSR (361 aa). Residues 362–578 are b; it reads EILQDNKVTQ…DDDMSSQMAK (217 aa). The c stretch occupies residues 579–653; that stretch reads LMASVGQEVP…LNKLMLSLTK (75 aa).

Belongs to the heat shock protein 90 family. In terms of assembly, homodimer.

It is found in the cytoplasm. Molecular chaperone. Has ATPase activity. The polypeptide is Chaperone protein HtpG (Colwellia psychrerythraea (strain 34H / ATCC BAA-681) (Vibrio psychroerythus)).